We begin with the raw amino-acid sequence, 200 residues long: Peptidyl-tRNA hydrolase (200 aa).

Tyr15 contacts tRNA. His20 functions as the Proton acceptor in the catalytic mechanism. TRNA is bound by residues Tyr66, Asn68, and Asn114.

The protein belongs to the PTH family. In terms of assembly, monomer.

The protein localises to the cytoplasm. The catalysed reaction is an N-acyl-L-alpha-aminoacyl-tRNA + H2O = an N-acyl-L-amino acid + a tRNA + H(+). Functionally, hydrolyzes ribosome-free peptidyl-tRNAs (with 1 or more amino acids incorporated), which drop off the ribosome during protein synthesis, or as a result of ribosome stalling. Catalyzes the release of premature peptidyl moieties from peptidyl-tRNA molecules trapped in stalled 50S ribosomal subunits, and thus maintains levels of free tRNAs and 50S ribosomes. This is Peptidyl-tRNA hydrolase from Paraburkholderia xenovorans (strain LB400).